We begin with the raw amino-acid sequence, 557 residues long: NADH-quinone oxidoreductase subunit C/D (557 aa).

Positions 1–13 (MSLEEQQSDDPAE) are enriched in acidic residues. The segment at 1 to 20 (MSLEEQQSDDPAELESGVSR) is disordered. Positions 1 to 174 (MSLEEQQSDD…ATLREHANPL (174 aa)) are NADH dehydrogenase I subunit C. Positions 184-557 (NTMYINIGPH…LDIVLGEVDR (374 aa)) are NADH dehydrogenase I subunit D. K517 is covalently cross-linked (Glycyl lysine isopeptide (Lys-Gly) (interchain with G-Cter in SAMP2)).

This sequence in the N-terminal section; belongs to the complex I 30 kDa subunit family. The protein in the C-terminal section; belongs to the complex I 49 kDa subunit family. NDH-1 is composed of 13 different subunits. Subunits NuoB, CD, E, F, and G constitute the peripheral sector of the complex.

It is found in the cell membrane. The enzyme catalyses a quinone + NADH + 5 H(+)(in) = a quinol + NAD(+) + 4 H(+)(out). Functionally, NDH-1 shuttles electrons from NADH, via FMN and iron-sulfur (Fe-S) centers, to quinones in the respiratory chain. Couples the redox reaction to proton translocation (for every two electrons transferred, four hydrogen ions are translocated across the cytoplasmic membrane), and thus conserves the redox energy in a proton gradient. This chain is NADH-quinone oxidoreductase subunit C/D (nuoCD), found in Haloferax volcanii (strain ATCC 29605 / DSM 3757 / JCM 8879 / NBRC 14742 / NCIMB 2012 / VKM B-1768 / DS2) (Halobacterium volcanii).